The sequence spans 194 residues: Flagellar transcriptional regulator FlhC (194 aa).

Positions 139, 142, 159, and 162 each coordinate Zn(2+).

Belongs to the FlhC family. In terms of assembly, heterohexamer composed of two FlhC and four FlhD subunits. Each FlhC binds a FlhD dimer, forming a heterotrimer, and a hexamer assembles by dimerization of two heterotrimers. The cofactor is Zn(2+).

Its subcellular location is the cytoplasm. In terms of biological role, functions in complex with FlhD as a master transcriptional regulator that regulates transcription of several flagellar and non-flagellar operons by binding to their promoter region. Activates expression of class 2 flagellar genes, including fliA, which is a flagellum-specific sigma factor that turns on the class 3 genes. Also regulates genes whose products function in a variety of physiological pathways. The sequence is that of Flagellar transcriptional regulator FlhC from Serratia marcescens.